Reading from the N-terminus, the 545-residue chain is Chaperonin GroEL 1 (545 aa).

ATP-binding positions include 29 to 32 (TLGP), 86 to 90 (DGTTT), Gly413, 479 to 481 (DAA), and Asp495. Residues 525-545 (PEPKENNPAGSGAGMGGDFDY) are disordered. The span at 535–545 (SGAGMGGDFDY) shows a compositional bias: gly residues.

This sequence belongs to the chaperonin (HSP60) family. In terms of assembly, forms a cylinder of 14 subunits composed of two heptameric rings stacked back-to-back. Interacts with the co-chaperonin GroES.

The protein localises to the cytoplasm. The catalysed reaction is ATP + H2O + a folded polypeptide = ADP + phosphate + an unfolded polypeptide.. Together with its co-chaperonin GroES, plays an essential role in assisting protein folding. The GroEL-GroES system forms a nano-cage that allows encapsulation of the non-native substrate proteins and provides a physical environment optimized to promote and accelerate protein folding. The polypeptide is Chaperonin GroEL 1 (Thermosynechococcus vestitus (strain NIES-2133 / IAM M-273 / BP-1)).